The primary structure comprises 1530 residues: Coiled-coil domain-containing protein 141 (1530 aa).

Position 91 is a phosphothreonine (Thr-91). Coiled-coil stretches lie at residues 642–706 (VKNE…EALM), 758–783 (VKEK…QDYE), and 861–970 (SNVS…KTSD). The segment at 1210–1241 (SPDDISLPPLPGSPESPLAPSDMEVEEPVSSS) is disordered. One can recognise an Ig-like domain in the interval 1409–1530 (PNFSRLLSNV…VSLMYWLLTQ (122 aa)).

In terms of assembly, interacts with DISC1. Interacts preferentially with phosphorylated forms of myosin regulatory light chain (MRLC). Interacts (via the N-terminal region) with HDAC6; inhibits the deacetylase activity of HDAC6. Interacts with KIBRA (via the C-terminal region); retains AMPAR in the cytosol after internalization. Ubiquitinated and degradated by the CDC20-APC/C pathway. During brain development, CDC20-APC/C complex degrades CCDC141 after centrosome translocation into the dilated area. CCDC141 is restabilized in the dilation until the centrosome enters the dilation, at which point it is once again immediately destabilized by CDC20-APC/C complex. The oscillatory regulation of CCDC141 protein is needed for proper cortical migration. In terms of processing, phosphorylation at Thr-91 by PLK1 affects CCDC141 degradation.

Its subcellular location is the cytoplasm. It localises to the cytoskeleton. The protein localises to the microtubule organizing center. It is found in the centrosome. In terms of biological role, plays a critical role in cortical radial and GnRH neurons migration during brain development. Regulates cortical radial migration by negatively controlling the activity of histone deacetylase 6 (HDAC6) and promotes centrosome maturation. CAMDI is required for dilation formation of cortical neurons during radial migration. Plays a critical role in learning and memory performance through regulation of AMPA-selective glutamate receptors (AMPARs) cell surface expression in competition with KIBRA. The sequence is that of Coiled-coil domain-containing protein 141 (CCDC141) from Homo sapiens (Human).